Consider the following 785-residue polypeptide: Endonuclease MutS2 (785 aa).

334 to 341 (GPNTGGKT) is an ATP binding site. The Smr domain maps to 710 to 785 (LDLRGYNVED…GVGATIAELK (76 aa)).

It belongs to the DNA mismatch repair MutS family. MutS2 subfamily. As to quaternary structure, homodimer. Binds to stalled ribosomes, contacting rRNA.

In terms of biological role, endonuclease that is involved in the suppression of homologous recombination and thus may have a key role in the control of bacterial genetic diversity. Acts as a ribosome collision sensor, splitting the ribosome into its 2 subunits. Detects stalled/collided 70S ribosomes which it binds and splits by an ATP-hydrolysis driven conformational change. Acts upstream of the ribosome quality control system (RQC), a ribosome-associated complex that mediates the extraction of incompletely synthesized nascent chains from stalled ribosomes and their subsequent degradation. Probably generates substrates for RQC. The protein is Endonuclease MutS2 of Brevibacillus brevis (strain 47 / JCM 6285 / NBRC 100599).